We begin with the raw amino-acid sequence, 318 residues long: Ribosomal lysine N-methyltransferase 5 (318 aa).

Residues W95, 139 to 141 (GSG), D161, W214, and M241 each bind S-adenosyl-L-methionine.

Belongs to the class I-like SAM-binding methyltransferase superfamily. RKM5 family.

Functionally, S-adenosyl-L-methionine-dependent protein-lysine N-methyltransferase that methylates 60S ribosomal protein L1. The polypeptide is Ribosomal lysine N-methyltransferase 5 (RKM5) (Zygosaccharomyces rouxii (strain ATCC 2623 / CBS 732 / NBRC 1130 / NCYC 568 / NRRL Y-229)).